We begin with the raw amino-acid sequence, 182 residues long: NADH-quinone oxidoreductase subunit C 2 (182 aa).

The disordered stretch occupies residues tyrosine 153–arginine 182.

Belongs to the complex I 30 kDa subunit family. As to quaternary structure, NDH-1 is composed of 14 different subunits. Subunits NuoB, C, D, E, F, and G constitute the peripheral sector of the complex.

Its subcellular location is the cell inner membrane. It catalyses the reaction a quinone + NADH + 5 H(+)(in) = a quinol + NAD(+) + 4 H(+)(out). Functionally, NDH-1 shuttles electrons from NADH, via FMN and iron-sulfur (Fe-S) centers, to quinones in the respiratory chain. The immediate electron acceptor for the enzyme in this species is believed to be ubiquinone. Couples the redox reaction to proton translocation (for every two electrons transferred, four hydrogen ions are translocated across the cytoplasmic membrane), and thus conserves the redox energy in a proton gradient. In Rhizobium meliloti (strain 1021) (Ensifer meliloti), this protein is NADH-quinone oxidoreductase subunit C 2.